The chain runs to 199 residues: Recombination protein RecR (199 aa).

A C4-type zinc finger spans residues C56 to C71. The 96-residue stretch at S79–P174 folds into the Toprim domain.

Belongs to the RecR family.

Functionally, may play a role in DNA repair. It seems to be involved in an RecBC-independent recombinational process of DNA repair. It may act with RecF and RecO. The sequence is that of Recombination protein RecR from Streptomyces coelicolor (strain ATCC BAA-471 / A3(2) / M145).